A 222-amino-acid polypeptide reads, in one-letter code: Glycerol-3-phosphate acyltransferase (222 aa).

6 helical membrane passes run 4-24 (ALLLCLCLLLITYLMGSIPTG), 56-76 (PAAIAVLAIDISKGVMAVALV), 87-107 (ALPAAWQNWLTLGVAIAVVLG), 130-150 (FMLNIWLALGTLATFLTVIFF), 153-173 (IVSLSSIVAAIAVNGIALALQ), and 174-191 (LPPPYLAFTFLAGMYVIV).

It belongs to the PlsY family. As to quaternary structure, probably interacts with PlsX.

It localises to the cell inner membrane. It carries out the reaction an acyl phosphate + sn-glycerol 3-phosphate = a 1-acyl-sn-glycero-3-phosphate + phosphate. It participates in lipid metabolism; phospholipid metabolism. Its function is as follows. Catalyzes the transfer of an acyl group from acyl-phosphate (acyl-PO(4)) to glycerol-3-phosphate (G3P) to form lysophosphatidic acid (LPA). This enzyme utilizes acyl-phosphate as fatty acyl donor, but not acyl-CoA or acyl-ACP. This is Glycerol-3-phosphate acyltransferase from Synechocystis sp. (strain ATCC 27184 / PCC 6803 / Kazusa).